We begin with the raw amino-acid sequence, 86 residues long: Cell division topological specificity factor (86 aa).

It belongs to the MinE family.

In terms of biological role, prevents the cell division inhibition by proteins MinC and MinD at internal division sites while permitting inhibition at polar sites. This ensures cell division at the proper site by restricting the formation of a division septum at the midpoint of the long axis of the cell. This chain is Cell division topological specificity factor, found in Albidiferax ferrireducens (strain ATCC BAA-621 / DSM 15236 / T118) (Rhodoferax ferrireducens).